The following is a 158-amino-acid chain: 6,7-dimethyl-8-ribityllumazine synthase (158 aa).

Residues phenylalanine 22, 56 to 58 (ALE), and 80 to 82 (VVI) each bind 5-amino-6-(D-ribitylamino)uracil. Residue 85-86 (ET) participates in (2S)-2-hydroxy-3-oxobutyl phosphate binding. Histidine 88 acts as the Proton donor in catalysis. Asparagine 113 is a binding site for 5-amino-6-(D-ribitylamino)uracil. Arginine 127 lines the (2S)-2-hydroxy-3-oxobutyl phosphate pocket.

This sequence belongs to the DMRL synthase family.

It catalyses the reaction (2S)-2-hydroxy-3-oxobutyl phosphate + 5-amino-6-(D-ribitylamino)uracil = 6,7-dimethyl-8-(1-D-ribityl)lumazine + phosphate + 2 H2O + H(+). It functions in the pathway cofactor biosynthesis; riboflavin biosynthesis; riboflavin from 2-hydroxy-3-oxobutyl phosphate and 5-amino-6-(D-ribitylamino)uracil: step 1/2. Functionally, catalyzes the formation of 6,7-dimethyl-8-ribityllumazine by condensation of 5-amino-6-(D-ribitylamino)uracil with 3,4-dihydroxy-2-butanone 4-phosphate. This is the penultimate step in the biosynthesis of riboflavin. This Neisseria meningitidis serogroup C (strain 053442) protein is 6,7-dimethyl-8-ribityllumazine synthase.